A 427-amino-acid chain; its full sequence is MALRCINNLEIFLRRCTAPTLHRCCVASSRTAHTASSSKGSGGDNSKDKENNGQNKSGYRSFGWRSAFQFCVPFSLGALVSAVLIERHRDELTPTISARSLKGRRNEFNFIADVVAGCGDSVVYIEIKDTRHFDYFSGQPITASNGSGFVIEQNGLILTNAHVVINKPHTMVQVRLSDGRTFPATIEDVDQTSDLATLRIQVSGLPVMKLGKSSTLRSGEWVVALGSPLALSNTVTAGVISATQRASQELGLRNRDINYLQTDAAITFGNSGGPLVNLDGEAIGVNSMKVTAGISFAIPIDYVKVFLERAAERRKKGSAHKTGYPVKRYMGITMLTLTPDILFELKSRSQNMPNNLMHGVLVWKVIVGSPAHSGGLQPGDIVTHINKKEIKNSSDVYDALAEGRKDLEIVILRGVKQMHVKITPEDP.

The segment at 33 to 55 (HTASSSKGSGGDNSKDKENNGQN) is disordered. The chain crosses the membrane as a helical span at residues 66-86 (SAFQFCVPFSLGALVSAVLIE). The IAP-binding signature appears at 78 to 81 (ALVS). Residues 144–307 (SNGSGFVIEQ…IPIDYVKVFL (164 aa)) are serine protease. Catalysis depends on charge relay system residues H162, D194, and S271. In terms of domain architecture, PDZ spans 330–415 (MGITMLTLTP…DLEIVILRGV (86 aa)).

Belongs to the peptidase S1C family. In terms of assembly, interacts with th/DIAP1 (via BIR 2 domain).

Its subcellular location is the mitochondrion intermembrane space. It is found in the mitochondrion membrane. It carries out the reaction Cleavage of non-polar aliphatic amino-acids at the P1 position, with a preference for Val, Ile and Met. At the P2 and P3 positions, Arg is selected most strongly with a secondary preference for other hydrophilic residues.. In terms of biological role, serine protease that shows proteolytic activity against a non-specific substrate beta-casein. Promotes or induces cell death either by direct binding to and inhibition of BIRC proteins (also called inhibitor of apoptosis proteins, IAPs), leading to an increase in caspase activity, or by a BIRC inhibition-independent, caspase-independent and serine protease activity-dependent mechanism. Can antagonize antiapoptotic activity of th/Diap1 by directly inducing the degradation of th/Diap1. The protein is Serine protease HTRA2, mitochondrial of Drosophila pseudoobscura pseudoobscura (Fruit fly).